The primary structure comprises 114 residues: Ghrelin (114 aa).

Positions 1–24 (MNFGKAAIFGVVLFCLLWTEGAQA) are cleaved as a signal peptide. Residue Thr-27 is the site of O-decanoyl threonine; alternate attachment. A lipid anchor (O-octanoyl threonine; alternate) is attached at Thr-27. A propeptide spans 55 to 114 (GVEDDLAGEEIGVTFPLDMKMTQEQFQKQRAAVQDFLYSSLLSLGSVQDTEDKNENPQSQ) (removed in mature form).

It belongs to the motilin family. O-octanoylated by GOAT/MBOAT4. O-octanoylation or O-decanoylation is essential for activity. The O-decanoylated form ghrelin-27-C10 differs in the length of the carbon backbone of the carboxylic acid bound to Thr-27. 33% of frog ghrelin is O-decanoylated. In terms of processing, 80% of frog ghrelin has Asn-52 cleaved from its C-terminus giving rise to ghrelin-27. In terms of tissue distribution, high levels in stomach. Moderate levels in small intestine, pancreas and testis. Low levels in heart, lung and gall bladder.

It localises to the secreted. Its function is as follows. Ligand for growth hormone secretagogue receptor type 1 (GHSR). Induces the release of growth hormone from the pituitary. Has an appetite-stimulating effect, induces adiposity and stimulates gastric acid secretion. Involved in growth regulation. This Aquarana catesbeiana (American bullfrog) protein is Ghrelin (GHRL).